Consider the following 235-residue polypeptide: Iron-sulfur cluster co-chaperone protein HscB (235 aa).

A divalent metal cation contacts are provided by Cys41, Cys44, Cys58, and Cys61. The 73-residue stretch at 72–144 (DYFSLMDCNR…LSRGLYLLKL (73 aa)) folds into the J domain.

This sequence belongs to the HscB family. As to quaternary structure, interacts with ISCU and HSPA9 to form an iron-sulfur transfer complex. Interacts with SDHAF1 (via the first LYR motif); the interaction recruits the iron-sulfur transfer complex composed of HSC20, HSPA9 and ISCU and mediates the incorporation of iron-sulfur clusters into SDHB which also interacts with HSC20. Interacts with the cytoplasmic form of ISCU and with CIA complex member CIAO1 (via LYR motif). In terms of assembly, homodimer. Interacts with ISCU (cytoplasmic form); this interaction stabilizes the (Fe-S) clusters on ISCU. Interacts with the CIA complex member CIAO1 (via LYR motif). As to expression, expressed in lung, brain, stomach, spleen, ovary, testis, liver, muscle and heart.

It localises to the cytoplasm. The protein resides in the mitochondrion. It functions in the pathway cofactor biosynthesis; iron-sulfur cluster biosynthesis. Acts as a co-chaperone in iron-sulfur cluster assembly in mitochondria. Required for incorporation of iron-sulfur clusters into SDHB, the iron-sulfur protein subunit of succinate dehydrogenase that is involved in complex II of the mitochondrial electron transport chain. Recruited to SDHB by interaction with SDHAF1 which first binds SDHB and then recruits the iron-sulfur transfer complex formed by HSC20, HSPA9 and ISCU through direct binding to HSC20. Plays an essential role in hematopoiesis. Its function is as follows. Acts as a co-chaperone in iron-sulfur cluster assembly in the cytoplasm. Also mediates complex formation between components of the cytosolic iron-sulfur biogenesis pathway and the CIA targeting complex composed of CIAO1, DIPK1B/FAM69B and MMS19 by binding directly to the scaffold protein ISCU and to CIAO1. This facilitates iron-sulfur cluster insertion into a number of cytoplasmic and nuclear proteins including POLD1, ELP3, DPYD and PPAT. This Homo sapiens (Human) protein is Iron-sulfur cluster co-chaperone protein HscB.